Here is a 577-residue protein sequence, read N- to C-terminus: Arginine--tRNA ligase (577 aa).

Residues 122–132 (PNVAKEMHVGH) carry the 'HIGH' region motif.

The protein belongs to the class-I aminoacyl-tRNA synthetase family. In terms of assembly, monomer.

Its subcellular location is the cytoplasm. It carries out the reaction tRNA(Arg) + L-arginine + ATP = L-arginyl-tRNA(Arg) + AMP + diphosphate. The protein is Arginine--tRNA ligase of Aliivibrio salmonicida (strain LFI1238) (Vibrio salmonicida (strain LFI1238)).